A 349-amino-acid polypeptide reads, in one-letter code: Aquaporin-4 (349 aa).

Transmembrane regions (helical) follow at residues 92–112 (LSESLAMFFFMSLLLGCAATA) and 125–147 (AFYHGFSIIFAIYVAGGISGGLL). The short motif at 148–150 (NPA) is the NPA 1 element. Residues 167–187 (LIYMSAQYFGAFIASAVVYLI) traverse the membrane as a helical segment. Asparagine 194 and asparagine 207 each carry an N-linked (GlcNAc...) asparagine glycan. Transmembrane regions (helical) follow at residues 225 to 245 (GAIFNQIFCTMLLTIGFLSIC) and 256 to 276 (MFPFAVGMLIMTVFLAFSYSA). The short motif at 281–283 (NPA) is the NPA 2 element. Residues 314–334 (WLFPYVGALLGGVIYEIFIGI) form a helical membrane-spanning segment.

The protein belongs to the MIP/aquaporin (TC 1.A.8) family.

Its subcellular location is the cell membrane. Aquaglyceroporin that may modulate the water content and osmolytes during anhydrobiosis. The sequence is that of Aquaporin-4 from Milnesium tardigradum (Water bear).